A 180-amino-acid polypeptide reads, in one-letter code: uncharacterized protein (180 aa).

6 helical membrane passes run 4–24 (KSNIKLILATDLLAVLILSLF), 25–45 (IKNFKMVLAFLLAVFVIWLFI), 57–77 (NLLAMSVGFIEGILIFLGIIY), 81–101 (FLDITLGIFAILILIVMGILF), 124–144 (FLTLISIFGMLLTIYVFLLIL), and 156–176 (IIRTIMLVITANMFIIEFYTF).

The protein resides in the cell membrane. This is an uncharacterized protein from Methanocaldococcus jannaschii (strain ATCC 43067 / DSM 2661 / JAL-1 / JCM 10045 / NBRC 100440) (Methanococcus jannaschii).